The primary structure comprises 210 residues: MSNQFNTRKRLMAMLANEMRLEQEENAIAKQSAKFHSKFATTMENIKRQQHESKKLNTLLNQRRDEVEKRNALKNAVRDKLAEEEQHCAEMQAQLGKKKQERDKLIACAHILSEAANTYINRKALPERVKGVAVSPDNGQWIPFDFNAHDRQGLAALWTQVNRSSRNINKWRQLSSVGNSSMPAPSGKENANVSMTSVIEIDLTSPPSQK.

A coiled-coil region spans residues 42–106 (TMENIKRQQH…KKKQERDKLI (65 aa)).

It belongs to the SPC25 family. As to quaternary structure, component of the Ndc80 complex, which is composed of Ndc80, Nuf2 and Spc25.

The protein resides in the nucleus. It localises to the chromosome. It is found in the centromere. The protein localises to the kinetochore. Acts as a component of the essential kinetochore-associated Ndc80 complex, which is required for chromosome segregation and spindle checkpoint activity during meiosis and mitosis. Required for kinetochore integrity and the organization of stable microtubule binding sites in the outer plate of the kinetochore. Participates in SAC signaling that responds specifically to disruptions in spindle microtubule dynamics. The NDC80 complex synergistically enhances the affinity of the SKA1 complex for microtubules and may allow the NDC80 complex to track depolymerizing microtubules. This is Kinetochore protein Spc25 from Drosophila virilis (Fruit fly).